The primary structure comprises 296 residues: Lipoyl synthase (296 aa).

[4Fe-4S] cluster-binding residues include cysteine 37, cysteine 42, cysteine 48, cysteine 63, cysteine 67, cysteine 70, and serine 276. Residues 49-265 (WSKKHTTVMI…ERVAKTKGFL (217 aa)) enclose the Radical SAM core domain.

It belongs to the radical SAM superfamily. Lipoyl synthase family. Requires [4Fe-4S] cluster as cofactor.

It is found in the cytoplasm. The enzyme catalyses [[Fe-S] cluster scaffold protein carrying a second [4Fe-4S](2+) cluster] + N(6)-octanoyl-L-lysyl-[protein] + 2 oxidized [2Fe-2S]-[ferredoxin] + 2 S-adenosyl-L-methionine + 4 H(+) = [[Fe-S] cluster scaffold protein] + N(6)-[(R)-dihydrolipoyl]-L-lysyl-[protein] + 4 Fe(3+) + 2 hydrogen sulfide + 2 5'-deoxyadenosine + 2 L-methionine + 2 reduced [2Fe-2S]-[ferredoxin]. The protein operates within protein modification; protein lipoylation via endogenous pathway; protein N(6)-(lipoyl)lysine from octanoyl-[acyl-carrier-protein]: step 2/2. Catalyzes the radical-mediated insertion of two sulfur atoms into the C-6 and C-8 positions of the octanoyl moiety bound to the lipoyl domains of lipoate-dependent enzymes, thereby converting the octanoylated domains into lipoylated derivatives. In Rickettsia conorii (strain ATCC VR-613 / Malish 7), this protein is Lipoyl synthase.